The sequence spans 511 residues: AMP phosphorylase (511 aa).

Residues G168, 194–199 (SRAITS), and T203 contribute to the AMP site. The active-site Proton donor is the D256. Residues S262 and K286 each contribute to the AMP site.

The protein belongs to the thymidine/pyrimidine-nucleoside phosphorylase family. Type 2 subfamily.

It carries out the reaction AMP + phosphate = alpha-D-ribose 1,5-bisphosphate + adenine. The catalysed reaction is CMP + phosphate = cytosine + alpha-D-ribose 1,5-bisphosphate. It catalyses the reaction UMP + phosphate = alpha-D-ribose 1,5-bisphosphate + uracil. Functionally, catalyzes the conversion of AMP and phosphate to adenine and ribose 1,5-bisphosphate (R15P). Exhibits phosphorylase activity toward CMP and UMP in addition to AMP. Functions in an archaeal AMP degradation pathway, together with R15P isomerase and RubisCO. The chain is AMP phosphorylase from Thermofilum pendens (strain DSM 2475 / Hrk 5).